We begin with the raw amino-acid sequence, 157 residues long: 2-C-methyl-D-erythritol 2,4-cyclodiphosphate synthase (157 aa).

Residues Asp-8 and His-10 each contribute to the a divalent metal cation site. 4-CDP-2-C-methyl-D-erythritol 2-phosphate is bound by residues 8 to 10 and 34 to 35; these read DVH and HS. Residue His-42 participates in a divalent metal cation binding. Residues 56-58, 61-65, 100-106, 132-135, Phe-139, and Arg-142 each bind 4-CDP-2-C-methyl-D-erythritol 2-phosphate; these read DIG, FPDTD, AQAPKMA, and TTTE.

This sequence belongs to the IspF family. Homotrimer. The cofactor is a divalent metal cation.

It catalyses the reaction 4-CDP-2-C-methyl-D-erythritol 2-phosphate = 2-C-methyl-D-erythritol 2,4-cyclic diphosphate + CMP. The protein operates within isoprenoid biosynthesis; isopentenyl diphosphate biosynthesis via DXP pathway; isopentenyl diphosphate from 1-deoxy-D-xylulose 5-phosphate: step 4/6. Involved in the biosynthesis of isopentenyl diphosphate (IPP) and dimethylallyl diphosphate (DMAPP), two major building blocks of isoprenoid compounds. Catalyzes the conversion of 4-diphosphocytidyl-2-C-methyl-D-erythritol 2-phosphate (CDP-ME2P) to 2-C-methyl-D-erythritol 2,4-cyclodiphosphate (ME-CPP) with a corresponding release of cytidine 5-monophosphate (CMP). This is 2-C-methyl-D-erythritol 2,4-cyclodiphosphate synthase from Azotobacter vinelandii (strain DJ / ATCC BAA-1303).